A 436-amino-acid polypeptide reads, in one-letter code: Chromosomal replication initiator protein DnaA (436 aa).

Positions 1 to 80 are domain I, interacts with DnaA modulators; sequence MSHEAVWQHV…QAPRFELRVV (80 aa). The tract at residues 80 to 100 is domain II; that stretch reads VPGVVVQEDIFQAAPAEAPRP. Residues 101-317 form a domain III, AAA+ region region; sequence KLNPKYTFEN…GALMRAIAFA (217 aa). Positions 145, 147, 148, and 149 each coordinate ATP. Residues 318-436 form a domain IV, binds dsDNA region; it reads SLNGVELTRA…LLRTLREACT (119 aa).

This sequence belongs to the DnaA family. Oligomerizes as a right-handed, spiral filament on DNA at oriC.

It localises to the cytoplasm. It carries out the reaction ATP + H2O = ADP + phosphate + H(+). In terms of biological role, plays an essential role in the initiation and regulation of chromosomal replication. ATP-DnaA binds to the origin of replication (oriC) to initiate formation of the DNA replication initiation complex once per cell cycle. Binds the DnaA box (a 9 base pair repeat at the origin) and separates the double-stranded (ds)DNA. Forms a right-handed helical filament on oriC DNA; dsDNA binds to the exterior of the filament while single-stranded (ss)DNA is stabiized in the filament's interior. The ATP-DnaA-oriC complex binds and stabilizes one strand of the AT-rich DNA unwinding element (DUE), permitting loading of DNA polymerase. After initiation quickly degrades to an ADP-DnaA complex that is not apt for DNA replication. Binds acidic phospholipids. Its function is as follows. The DnaA box consensus is 5'-TTATC[CA]A[CA]A-3' in this bacterium; oriC consists of 13 clustered DnaA boxes and a 40 base pair AT-rich region. ATP-DnaA binds cooperatively to multiple DnaA boxes, while ADP-DnaA binds with low cooperativity to the individual DnaA boxes. About 16-18 DnaA protein molecules bind their sites in oriC. Has a slow ATPase activity. Binds linear and supercoiled DNA. The polypeptide is Chromosomal replication initiator protein DnaA (Thermus thermophilus (strain ATCC 27634 / DSM 579 / HB8)).